We begin with the raw amino-acid sequence, 401 residues long: MKSVIFGLQWGDEGKGKVTTYFSKDYDYVVRYSGGSNAGHTVEYTDFKLIHHLLPSFYVKKNVGAIISNGVVLDLEQLVEEIEEFKSKTGTYPKLYISELAHVVLPHHKKLDEKLEQIKGKNAVGTTKRGIGPAYADKVHRIGIRLSDFKNKDKFYEKIKNISKLYKNLYNIEVESIENVLTSYEKLKSHIVPHGEIINLINQNKILFESTQGVLLDIDVGTYPYVTGANCNTTGIQNGVGFPVKTENYIGVFKAYLTRVGNGPFPTEAFGKEGEEIRKRGHEFGATTGRPRRCGWLDLPLLKYAITVSGATELVMTKGDILNGMEKIKVCVAYKIDGNIVDRISSVDDLEKAEPIYETLDGWENHTSKEFNEYLSFIESYVKRKITHISVGPKVEEIIKL.

GTP contacts are provided by residues 11–17 (GDEGKGK) and 39–41 (GHT). Aspartate 12 functions as the Proton acceptor in the catalytic mechanism. The Mg(2+) site is built by aspartate 12 and glycine 39. Residues 12-15 (DEGK), 37-40 (NAGH), threonine 127, arginine 141, glutamine 212, threonine 227, and arginine 290 each bind IMP. The active-site Proton donor is histidine 40. Substrate is bound at residue 286-292 (ATTGRPR). Residues arginine 292, 318-320 (KGD), and 390-392 (SVG) contribute to the GTP site.

It belongs to the adenylosuccinate synthetase family. As to quaternary structure, homodimer. The cofactor is Mg(2+).

Its subcellular location is the cytoplasm. It catalyses the reaction IMP + L-aspartate + GTP = N(6)-(1,2-dicarboxyethyl)-AMP + GDP + phosphate + 2 H(+). It functions in the pathway purine metabolism; AMP biosynthesis via de novo pathway; AMP from IMP: step 1/2. In terms of biological role, plays an important role in the de novo pathway of purine nucleotide biosynthesis. Catalyzes the first committed step in the biosynthesis of AMP from IMP. In Thermosipho africanus (strain TCF52B), this protein is Adenylosuccinate synthetase.